We begin with the raw amino-acid sequence, 698 residues long: Auxin response factor 22 (698 aa).

Positions 128–230 (FAKTLTQSDA…ELCVGIRRAK (103 aa)) form a DNA-binding region, TF-B3. The span at 549–577 (TSSGSTETLSPGVTGNSSPNGNAHKTGNA) shows a compositional bias: polar residues. The tract at residues 549-579 (TSSGSTETLSPGVTGNSSPNGNAHKTGNASD) is disordered. The region spanning 603–683 (AGHCKVFMES…RRLTIIAGDR (81 aa)) is the PB1 domain.

This sequence belongs to the ARF family. Homodimers and heterodimers. In terms of tissue distribution, expressed in roots, culms, leaves and young panicles.

The protein localises to the nucleus. In terms of biological role, auxin response factors (ARFs) are transcriptional factors that bind specifically to the DNA sequence 5'-TGTCTC-3' found in the auxin-responsive promoter elements (AuxREs). The protein is Auxin response factor 22 (ARF22) of Oryza sativa subsp. japonica (Rice).